Reading from the N-terminus, the 1116-residue chain is Minor outer capsid protein P2 (1116 aa).

The region spanning 929–1116 is the PPPDE domain; sequence ENNAANFFER…IGSNCSKLCA (188 aa). Residues His-953 and Cys-1111 contribute to the active site.

This sequence belongs to the phytoreovirus minor outer capsid protein P2 family. As to quaternary structure, interacts with host ent-kaurene oxidases OSKO1, OSKO2, OSKOL4 and OSKOL5; this interaction.

Its subcellular location is the virion. The protein resides in the host cytoplasm. In terms of biological role, minor capsid protein present in the outer capsid, which is required for adsorption of the virus onto host insect cells (Potential). Could play a role in the host plant virus induced dwarfism. This Rice dwarf virus (isolate Fujian) (RDV) protein is Minor outer capsid protein P2.